We begin with the raw amino-acid sequence, 625 residues long: Threonine--tRNA ligase (625 aa).

The interval 1–143 (MRILLIHSDY…ELSRTIIPEG (143 aa)) is editing domain. A catalytic region spans residues 206–505 (PHVKLMLEHE…MQEGKKPMLP (300 aa)). C298, H350, and H474 together coordinate Zn(2+).

It belongs to the class-II aminoacyl-tRNA synthetase family. As to quaternary structure, homodimer. It depends on Zn(2+) as a cofactor.

Its subcellular location is the cytoplasm. It carries out the reaction tRNA(Thr) + L-threonine + ATP = L-threonyl-tRNA(Thr) + AMP + diphosphate + H(+). Functionally, catalyzes the attachment of threonine to tRNA(Thr) in a two-step reaction: L-threonine is first activated by ATP to form Thr-AMP and then transferred to the acceptor end of tRNA(Thr). Also edits incorrectly charged L-seryl-tRNA(Thr). This Pyrococcus horikoshii (strain ATCC 700860 / DSM 12428 / JCM 9974 / NBRC 100139 / OT-3) protein is Threonine--tRNA ligase.